The chain runs to 416 residues: Thyroid hormone receptor alpha (416 aa).

Over residues 1-13 (MEPMSNKQDSNSS) the composition is skewed to polar residues. The segment at 1–37 (MEPMSNKQDSNSSEGDEKGWPDVPKRKRKNSQCSMKS) is disordered. Residues 1-58 (MEPMSNKQDSNSSEGDEKGWPDVPKRKRKNSQCSMKSMSALSVSVPGYIPSYLEKDEP) are modulating. Residues 15 to 24 (GDEKGWPDVP) show a composition bias toward basic and acidic residues. 8 residues coordinate Zn(2+): cysteine 59, cysteine 62, cysteine 76, cysteine 79, cysteine 97, cysteine 103, cysteine 113, and cysteine 116. 2 consecutive NR C4-type zinc fingers follow at residues 59–79 (CVVC…CEGC) and 97–121 (CKYE…FKKC). Residues 59 to 133 (CVVCGDKATG…VGMAMDLVLD (75 aa)) constitute a DNA-binding region (nuclear receptor). The region spanning 169 to 413 (AEWELIRMAT…PPLFLEVFED (245 aa)) is the NR LBD domain. Arginine 234 lines the 3,3',5-triiodo-L-thyronine pocket.

The protein belongs to the nuclear hormone receptor family. NR1 subfamily.

The protein resides in the nucleus. Its function is as follows. Nuclear hormone receptor that can act as a repressor or activator of transcription. High affinity receptor for thyroid hormones, including triiodothyronine and thyroxine. The polypeptide is Thyroid hormone receptor alpha (thra) (Hippoglossus hippoglossus (Atlantic halibut)).